Consider the following 283-residue polypeptide: Elongation factor Ts (283 aa).

An involved in Mg(2+) ion dislocation from EF-Tu region spans residues 80–83 (TDFV).

Belongs to the EF-Ts family.

It localises to the cytoplasm. In terms of biological role, associates with the EF-Tu.GDP complex and induces the exchange of GDP to GTP. It remains bound to the aminoacyl-tRNA.EF-Tu.GTP complex up to the GTP hydrolysis stage on the ribosome. This Klebsiella pneumoniae (strain 342) protein is Elongation factor Ts.